Reading from the N-terminus, the 686-residue chain is Soluble guanylate cyclase gcy-34 (686 aa).

His105 is a binding site for heme. 2 coiled-coil regions span residues 306 to 335 (KKHMNAMTKEEREQEVEAMEEEVESNELTQ) and 398 to 432 (VEVNLQLEANNEQLETMTHELEVERQKTDSILKDM). The Guanylate cyclase domain maps to 455 to 583 (TVMFCDLPAF…ETVTLASQME (129 aa)). The Mg(2+) site is built by Asp460 and Asp504.

The protein belongs to the adenylyl cyclase class-4/guanylyl cyclase family. As to quaternary structure, heterodimer; with other soluble guanylate cyclases. Requires heme as cofactor. As to expression, expressed in a small number of neurons, corresponding to URX, AQR and PQR neurons.

Its subcellular location is the cytoplasm. The catalysed reaction is GTP = 3',5'-cyclic GMP + diphosphate. Its activity is regulated as follows. May be regulated by molecular oxygen. Probably not activated by nitric oxide (NO). Synthesizes cyclic GMP (cGMP) from GTP. May be involved in sensitivity to quinine by regulating egl-4 activity through the production of cGMP. In Caenorhabditis elegans, this protein is Soluble guanylate cyclase gcy-34 (gcy-34).